We begin with the raw amino-acid sequence, 384 residues long: 4-hydroxy-3-methylbut-2-en-1-yl diphosphate synthase (flavodoxin) (384 aa).

4 residues coordinate [4Fe-4S] cluster: cysteine 280, cysteine 283, cysteine 315, and glutamate 322.

The protein belongs to the IspG family. Requires [4Fe-4S] cluster as cofactor.

The enzyme catalyses (2E)-4-hydroxy-3-methylbut-2-enyl diphosphate + oxidized [flavodoxin] + H2O + 2 H(+) = 2-C-methyl-D-erythritol 2,4-cyclic diphosphate + reduced [flavodoxin]. The protein operates within isoprenoid biosynthesis; isopentenyl diphosphate biosynthesis via DXP pathway; isopentenyl diphosphate from 1-deoxy-D-xylulose 5-phosphate: step 5/6. Functionally, converts 2C-methyl-D-erythritol 2,4-cyclodiphosphate (ME-2,4cPP) into 1-hydroxy-2-methyl-2-(E)-butenyl 4-diphosphate. This chain is 4-hydroxy-3-methylbut-2-en-1-yl diphosphate synthase (flavodoxin), found in Frankia alni (strain DSM 45986 / CECT 9034 / ACN14a).